A 464-amino-acid chain; its full sequence is Cytochrome P450 85A1 (464 aa).

Residues 2–22 form a helical membrane-spanning segment; the sequence is AFFLIFLSSFFGLCIFCTALL. Cys414 provides a ligand contact to heme.

It belongs to the cytochrome P450 family. It depends on heme as a cofactor. Expressed in sub-meristematic regions of shoot and root apexes, in zones undergoing lateral root formation, in fruits, and in all flower parts, with a high expression in young flower buds and at the joint in the pedicel.

It is found in the membrane. It catalyses the reaction 6-deoxocastasterone + reduced [NADPH--hemoprotein reductase] + O2 = 6alpha-hydroxycastasterone + oxidized [NADPH--hemoprotein reductase] + H2O + H(+). The enzyme catalyses 6alpha-hydroxycastasterone + reduced [NADPH--hemoprotein reductase] + O2 = castasterone + oxidized [NADPH--hemoprotein reductase] + 2 H2O + H(+). It carries out the reaction 6-deoxocastasterone + 2 reduced [NADPH--hemoprotein reductase] + 2 O2 = castasterone + 2 oxidized [NADPH--hemoprotein reductase] + 3 H2O + 2 H(+). Its pathway is plant hormone biosynthesis; brassinosteroid biosynthesis. Catalyzes the C6-oxidation step in brassinosteroids biosynthesis. Converts 6-deoxocastasterone (6-deoxoCS) to castasterone (CS). May also convert 6-deoxoteasterone (6-deoxoTE) to teasterone (TE), 3-dehydro-6-deoxoteasterone (6-deoxo3DT, 6-deoxo3DHT) to 3-dehydroteasterone (3DT, 3-DHT), and 6-deoxotyphasterol (6-deoxoTY) to typhasterol (TY), but not castasterone (CS) to brassinolide (BL). The sequence is that of Cytochrome P450 85A1 from Solanum lycopersicum (Tomato).